The primary structure comprises 276 residues: Probable NADH-ubiquinone oxidoreductase 30.4 kDa subunit, mitochondrial (276 aa).

The tract at residues 248-276 is disordered; that stretch reads EPVGEGKDFTPESFKLPTPQPEPEQEEKK.

Belongs to the complex I 30 kDa subunit family. Complex I is composed of about 30 different subunits. This is a component of the iron-sulfur protein fraction.

The protein resides in the mitochondrion inner membrane. The catalysed reaction is a ubiquinone + NADH + 5 H(+)(in) = a ubiquinol + NAD(+) + 4 H(+)(out). In terms of biological role, core subunit of the mitochondrial membrane respiratory chain NADH dehydrogenase (Complex I) that is believed to belong to the minimal assembly required for catalysis. Complex I functions in the transfer of electrons from NADH to the respiratory chain. The immediate electron acceptor for the enzyme is believed to be ubiquinone. Essential for N-alkane assimilation. This Candida maltosa (Yeast) protein is Probable NADH-ubiquinone oxidoreductase 30.4 kDa subunit, mitochondrial (ALI1).